Reading from the N-terminus, the 217-residue chain is Thiosulfate dehydrogenase electron acceptor (217 aa).

A signal peptide spans methionine 1–alanine 28. Cytochrome c domains are found at residues alanine 29–lysine 104 and alanine 116–proline 206. Heme c-binding residues include cysteine 37, cysteine 40, histidine 41, cysteine 137, cysteine 140, and histidine 141.

Binds 2 heme c groups covalently per subunit.

Its function is as follows. Acts as an electron acceptor for the thiosulfate dehydrogenase TsdA. The chain is Thiosulfate dehydrogenase electron acceptor (tsdB) from Thiomonas intermedia (strain K12) (Thiobacillus intermedius).